We begin with the raw amino-acid sequence, 417 residues long: Oxidoreductase phnG (417 aa).

6-hydroxy-FAD-binding positions include 16–20 (GGSYA), Arg-61, and Asp-317.

This sequence belongs to the FAD-dependent oxidoreductase family. The cofactor is 6-hydroxy-FAD.

It catalyses the reaction deoxyherqueinone + NADPH + O2 + H(+) = herqueinone + NADP(+) + H2O. It functions in the pathway secondary metabolite biosynthesis. Its function is as follows. Oxidoreductase; part of the gene cluster that mediates the biosynthesis of phenalenones such as herqueinone, compounds that have been reported to treat tumors, bacterial infections and/or mycoses, and rheumatic diseases. The non-reducing polyketide synthase phnA synthesizes the heptaketide backbone and cyclizes it into the angular, hemiketal-containing naphtho-gamma-pyrone prephenalenone. The product template (PT) domain of phnA catalyzes only the C4-C9 aldol condensation, which is unprecedented among known PT domains. The transformation of prephenalenone to phenalenones requires an FAD-dependent monooxygenase phnB, which catalyzes the C2 aromatic hydroxylation of prephenalenone and ring opening of the gamma-pyrone ring simultaneously. Subsequent intramolecular deprotonation of C3 phenolic oxygen accelerates phenalenone ring closure to yield the tricyclic phenalenone core with a C2 hydroxylation. The prenyltransferase phnF further catalyzes reverse C-prenylation of phenalenone by direct electrophilic substitution at C6, or possibly via first a forward O-prenylation of a neighboring phenol in phenalenone, followed by a Claisen rearrangement. The hydroalkoxylation enzyme phnH catalyzes the 5-exo-trig cyclization via acid catalysis after the spontaneous deprotonation of 7-OH, which leads to the formation of the dihydrobenzofuran atrovenetin. Atrovenetin is further converted to deoxyherqueinone by the O-methyltransferase phnC which can methylate C2-OH to stabilize the northern portion of the phenalenone core. Finally, the oxidoreductase phnG converts deoxyherqueinone to herqueinone via C6 hydroxylation. The protein is Oxidoreductase phnG of Penicillium herquei.